The sequence spans 106 residues: MENIGIDVKKPERTCNDPKCPFHGNLRIHGQIIVGTVVSTKMNGSIVLKRESRRLIKKYERYETKISKFHAHLPGCIDVRPGDRVKIAECRKLAKTISFVVVEKVN.

The protein belongs to the universal ribosomal protein uS17 family. Part of the 30S ribosomal subunit.

Functionally, one of the primary rRNA binding proteins, it binds specifically to the 5'-end of 16S ribosomal RNA. This is Small ribosomal subunit protein uS17 from Picrophilus torridus (strain ATCC 700027 / DSM 9790 / JCM 10055 / NBRC 100828 / KAW 2/3).